A 505-amino-acid polypeptide reads, in one-letter code: MSTMLWVVVAAVLLFVLPVVRVPMLDLTRRNIIRWQRGGIQKYTTRYYGFFHPYCNAGGGGEKVLWKAVQETLLYDPNCSIVIYTGDVDSSPKEIIANVIKRFDYEMDFNRVQFVFLKYRKWVDGSTWKHLTLVGQAMGSMLLTIEALLRFVPDIWLDTMGYPFGYPVVRWLAGLPVMTYTHYPVISSDMIHKIEIENQKQPSKKGTLKLIYWKLFMKWYQYVGKFVDVAITNSTWTGNHIRSIWKRVKIKVMYPPCSTEKLVKNSSPTAYETRQNQAVLIAQFRPEKRHKLVIQAYSDFISRTASKDHFKLVLIGSTRSEEDRAYVETLKSWAFDTLKIPKESLTFKTDCSYDDIKKFLAESTFGINAMWNEHFGIAVVEYAAAGLISLVHASAGPLLDIIVPWDSAKKQQLPYSDSTKDTRTGLFFKDKSDPDYKPTDAQFNNYGSLADIFEEANSLSIAERKQISERAKECASNKFSDNTFNHAWDHALDELEHKTSRLGSN.

The Lumenal portion of the chain corresponds to 1–4; that stretch reads MSTM. A helical transmembrane segment spans residues 5-25; sequence LWVVVAAVLLFVLPVVRVPML. Residues 26-130 are Cytoplasmic-facing; sequence DLTRRNIIRW…KWVDGSTWKH (105 aa). The helical intramembrane region spans 131-151; that stretch reads LTLVGQAMGSMLLTIEALLRF. Over 152 to 374 the chain is Cytoplasmic; that stretch reads VPDIWLDTMG…FGINAMWNEH (223 aa). Residues 375 to 395 constitute an intramembrane region (helical); sequence FGIAVVEYAAAGLISLVHASA. The Cytoplasmic segment spans residues 396 to 505; it reads GPLLDIIVPW…EHKTSRLGSN (110 aa).

The protein belongs to the glycosyltransferase group 1 family.

It localises to the endoplasmic reticulum membrane. The enzyme catalyses an alpha-D-Man-(1-&gt;3)-[alpha-D-Man-(1-&gt;6)]-beta-D-Man-(1-&gt;4)-beta-D-GlcNAc-(1-&gt;4)-alpha-D-GlcNAc-diphospho-di-trans,poly-cis-dolichol + 2 GDP-alpha-D-mannose = an alpha-D-Man-(1-&gt;2)-alpha-D-Man-(1-&gt;2)-alpha-D-Man-(1-&gt;3)-[alpha-D-Man-(1-&gt;6)]-beta-D-Man-(1-&gt;4)-beta-D-GlcNAc-(1-&gt;4)-alpha-D-GlcNAc-diphospho-di-trans,poly-cis-dolichol + 2 GDP + 2 H(+). Its pathway is protein modification; protein glycosylation. GDP-Man:Man(3)GlcNAc(2)-PP-Dol alpha-1,2-mannosyltransferase that operates in the biosynthetic pathway of dolichol-linked oligosaccharides, the glycan precursors employed in protein asparagine (N)-glycosylation. The assembly of dolichol-linked oligosaccharides begins on the cytosolic side of the endoplasmic reticulum membrane and finishes in its lumen. The sequential addition of sugars to dolichol pyrophosphate produces dolichol-linked oligosaccharides containing fourteen sugars, including two GlcNAcs, nine mannoses and three glucoses. Once assembled, the oligosaccharide is transferred from the lipid to nascent proteins by oligosaccharyltransferases. Catalyzes, on the cytoplasmic face of the endoplasmic reticulum, the addition of the fourth and fifth mannose residues to the dolichol-linked oligosaccharide chain, to produce Man(5)GlcNAc(2)-PP-dolichol core oligosaccharide. In Candida glabrata (strain ATCC 2001 / BCRC 20586 / JCM 3761 / NBRC 0622 / NRRL Y-65 / CBS 138) (Yeast), this protein is GDP-Man:Man(3)GlcNAc(2)-PP-Dol alpha-1,2-mannosyltransferase (ALG11).